We begin with the raw amino-acid sequence, 21 residues long: Short neurotoxin E1 (21 aa).

Residues 1-21 are disordered; sequence MICYNHQSSEPPTTXTCSEGQ.

Contains 4 disulfide bonds. As to expression, expressed by the venom gland.

It is found in the secreted. Binds to muscle nicotinic acetylcholine receptor (nAChR) and inhibit acetylcholine from binding to the receptor, thereby impairing neuromuscular transmission. This chain is Short neurotoxin E1, found in Micrurus pyrrhocryptus (Coral snake).